A 213-amino-acid chain; its full sequence is Lactobacillus shifted protein (213 aa).

The segment covering 28–38 (PRFTENAMQPN) has biased composition (polar residues). 2 disordered regions span residues 28–56 (PRFT…DATP) and 182–213 (PTSS…YEQR).

The polypeptide is Lactobacillus shifted protein (lbsA) (Emericella nidulans (strain FGSC A4 / ATCC 38163 / CBS 112.46 / NRRL 194 / M139) (Aspergillus nidulans)).